We begin with the raw amino-acid sequence, 277 residues long: Large ribosomal subunit protein uL2 (277 aa).

2 disordered regions span residues 32 to 58 (KSLTKGKVSRAGRDSSGRISVRRRGGG) and 225 to 277 (VAMN…RRNN).

The protein belongs to the universal ribosomal protein uL2 family. Part of the 50S ribosomal subunit. Forms a bridge to the 30S subunit in the 70S ribosome.

One of the primary rRNA binding proteins. Required for association of the 30S and 50S subunits to form the 70S ribosome, for tRNA binding and peptide bond formation. It has been suggested to have peptidyltransferase activity; this is somewhat controversial. Makes several contacts with the 16S rRNA in the 70S ribosome. The polypeptide is Large ribosomal subunit protein uL2 (Borrelia recurrentis (strain A1)).